A 218-amino-acid chain; its full sequence is Small ribosomal subunit protein uS3c (218 aa).

Residues 47–118 (VQKHMRISSG…RLNITITRIA (72 aa)) form the KH type-2 domain.

The protein belongs to the universal ribosomal protein uS3 family. Part of the 30S ribosomal subunit.

It is found in the plastid. The protein localises to the chloroplast. The polypeptide is Small ribosomal subunit protein uS3c (rps3) (Amborella trichopoda).